A 193-amino-acid polypeptide reads, in one-letter code: Calcium-binding protein E63-1 (193 aa).

4 consecutive EF-hand domains span residues 35–70 (VEIKDLRTAFDLLDRNRDGRVTANELQFMLKNLGIN), 71–106 (VSDELIHDLIREASHSGNGLINEAEFLQWVGRIQAL), 127–162 (DVTEDLIAAFRVFDRDGNGFITRDELQTAMEMIGEP), and 163–193 (LNEQQLEQLLVIADLDQDGRINYEEFTRLLL). Ca(2+) is bound by residues D48, N50, D52, R54, and E59. Ca(2+) contacts are provided by D140, D142, N144, E151, D176, D178, D180, R182, and E187.

This Drosophila melanogaster (Fruit fly) protein is Calcium-binding protein E63-1 (Eip63F-1).